The sequence spans 193 residues: Acyl-homoserine-lactone synthase (193 aa).

It belongs to the autoinducer synthase family.

It catalyses the reaction a fatty acyl-[ACP] + S-adenosyl-L-methionine = an N-acyl-L-homoserine lactone + S-methyl-5'-thioadenosine + holo-[ACP] + H(+). In terms of biological role, required for the synthesis of N-(3-oxodecanoyl)-L-homoserine lactone (ODHL), an autoinducer molecule which binds to VanR. The sequence is that of Acyl-homoserine-lactone synthase (vanI) from Vibrio anguillarum (Listonella anguillarum).